Consider the following 449-residue polypeptide: Glucose-6-phosphate isomerase (449 aa).

Catalysis depends on glutamate 290, which acts as the Proton donor. Active-site residues include histidine 311 and lysine 425.

The protein belongs to the GPI family.

The protein localises to the cytoplasm. The enzyme catalyses alpha-D-glucose 6-phosphate = beta-D-fructose 6-phosphate. The protein operates within carbohydrate biosynthesis; gluconeogenesis. It functions in the pathway carbohydrate degradation; glycolysis; D-glyceraldehyde 3-phosphate and glycerone phosphate from D-glucose: step 2/4. Its function is as follows. Catalyzes the reversible isomerization of glucose-6-phosphate to fructose-6-phosphate. The protein is Glucose-6-phosphate isomerase of Clostridioides difficile (strain 630) (Peptoclostridium difficile).